We begin with the raw amino-acid sequence, 341 residues long: LIM and senescent cell antigen-like-containing domain protein 2 (341 aa).

LIM zinc-binding domains lie at 13–74, 76–133, 138–195, 196–255, and 256–315; these read AMCQ…LFAP, CGFC…EKAK, FICQ…KMGI, PICG…LFGD, and VCYN…FPLE. Position 328 is a phosphoserine (S328).

Interacts with integrin-linked protein kinase 1 (ILK) via the first LIM domain, and in competition with LIMS1. Part of the heterotrimeric IPP complex composed of integrin-linked kinase (ILK), LIMS1 or LIMS2, and PARVA. Interacts with TGFB1I1. In terms of tissue distribution, detected in heart, lung, kidney, liver, urinary bladder, fat, skin, skeletal muscle, uterus, large intestine and testis.

The protein localises to the cell junction. The protein resides in the focal adhesion. It localises to the cell membrane. Adapter protein in a cytoplasmic complex linking beta-integrins to the actin cytoskeleton, bridges the complex to cell surface receptor tyrosine kinases and growth factor receptors. This chain is LIM and senescent cell antigen-like-containing domain protein 2 (Lims2), found in Mus musculus (Mouse).